Here is a 256-residue protein sequence, read N- to C-terminus: Endonuclease NucS (256 aa).

A disordered region spans residues 62-97; the sequence is AAKSAQHSRESVAGGAVDGDSATHSPESVAAGEPEK.

It belongs to the NucS endonuclease family.

The protein localises to the cytoplasm. Functionally, cleaves both 3' and 5' ssDNA extremities of branched DNA structures. The protein is Endonuclease NucS of Bifidobacterium longum (strain NCC 2705).